Here is a 913-residue protein sequence, read N- to C-terminus: Protein translocase subunit SecA (913 aa).

ATP contacts are provided by residues glutamine 87, 105 to 109, and aspartate 517; that span reads GEGKT. Disordered stretches follow at residues 568–588 and 871–913; these read ESRR…DPGS and EVAV…GKLS. Zn(2+) contacts are provided by cysteine 897, cysteine 899, cysteine 908, and histidine 909. Positions 903–913 are enriched in basic residues; the sequence is KKYKQCHGKLS.

It belongs to the SecA family. In terms of assembly, monomer and homodimer. Part of the essential Sec protein translocation apparatus which comprises SecA, SecYEG and auxiliary proteins SecDF-YajC and YidC. The cofactor is Zn(2+).

The protein localises to the cell inner membrane. Its subcellular location is the cytoplasm. The enzyme catalyses ATP + H2O + cellular proteinSide 1 = ADP + phosphate + cellular proteinSide 2.. Functionally, part of the Sec protein translocase complex. Interacts with the SecYEG preprotein conducting channel. Has a central role in coupling the hydrolysis of ATP to the transfer of proteins into and across the cell membrane, serving both as a receptor for the preprotein-SecB complex and as an ATP-driven molecular motor driving the stepwise translocation of polypeptide chains across the membrane. The protein is Protein translocase subunit SecA of Coxiella burnetii (strain RSA 493 / Nine Mile phase I).